Reading from the N-terminus, the 171-residue chain is Peptidyl-prolyl cis-trans isomerase slr1251 (171 aa).

In terms of domain architecture, PPIase cyclophilin-type spans 6 to 169 (FFDITIGSDT…QAIVISDCGE (164 aa)).

The protein belongs to the cyclophilin-type PPIase family.

The catalysed reaction is [protein]-peptidylproline (omega=180) = [protein]-peptidylproline (omega=0). PPIases accelerate the folding of proteins. It catalyzes the cis-trans isomerization of proline imidic peptide bonds in oligopeptides. The sequence is that of Peptidyl-prolyl cis-trans isomerase slr1251 from Synechocystis sp. (strain ATCC 27184 / PCC 6803 / Kazusa).